The chain runs to 311 residues: Serpentine receptor class gamma-6 (311 aa).

7 helical membrane passes run 24 to 44 (MGQL…IYVI), 58 to 78 (FWLL…FDIF), 101 to 121 (PLLI…KMVA), 148 to 168 (LTAC…NILI), 200 to 220 (YMQI…AILW), 235 to 255 (IWFA…YLHM), and 266 to 286 (IFML…VIMI).

The protein belongs to the nematode receptor-like protein srg family.

It localises to the membrane. The polypeptide is Serpentine receptor class gamma-6 (srg-6) (Caenorhabditis elegans).